Consider the following 197-residue polypeptide: Na(+)-translocating NADH-quinone reductase subunit E (197 aa).

6 consecutive transmembrane segments (helical) span residues 11–31 (SVFI…FLAV), 35–55 (VSTA…SVPV), 76–96 (FLKF…LEMF), 108–128 (LGIY…VSFM), 139–159 (VVYG…LAGI), and 175–195 (LGIT…FSGI).

Belongs to the NqrDE/RnfAE family. In terms of assembly, composed of six subunits; NqrA, NqrB, NqrC, NqrD, NqrE and NqrF.

It localises to the cell inner membrane. The catalysed reaction is a ubiquinone + n Na(+)(in) + NADH + H(+) = a ubiquinol + n Na(+)(out) + NAD(+). Functionally, NQR complex catalyzes the reduction of ubiquinone-1 to ubiquinol by two successive reactions, coupled with the transport of Na(+) ions from the cytoplasm to the periplasm. NqrA to NqrE are probably involved in the second step, the conversion of ubisemiquinone to ubiquinol. In Neisseria meningitidis serogroup C (strain 053442), this protein is Na(+)-translocating NADH-quinone reductase subunit E.